Here is a 202-residue protein sequence, read N- to C-terminus: Recombination protein RecR (202 aa).

The C4-type zinc finger occupies 56 to 71 (CVVCGTVSDGELCRIC). The 101-residue stretch at 79–179 (TMICVVEEPK…TVTRLASGLP (101 aa)) folds into the Toprim domain.

It belongs to the RecR family.

Functionally, may play a role in DNA repair. It seems to be involved in an RecBC-independent recombinational process of DNA repair. It may act with RecF and RecO. This Nocardia farcinica (strain IFM 10152) protein is Recombination protein RecR.